A 366-amino-acid chain; its full sequence is MFNPILSVSKSIPEKYLQMSQEELENHIQAIKDQLGNRLFMPTHHYQKNEVVQFADITGDSLELARICKENTEAEYFVFNGVHFMAETADILTDDSQDIYLPDLSAGCSMADMANITQALHGYDVLTEKFHLDILPLTYVNSTAAIKKFVGEHGGSCVTSGNAKSVVDWALNQGKVILFLPDQHLGRNTAYDLGIPLEQMAVWDPIAKELIYEGDLEDLRIVLWKGHCSVHEKFHKAHIDMARERDPEINVIVHPECEFEVVQAADYAGSTRYIIETIKNAPKGSRWLIGTEMNLVNRLKETYTDITIDSLNPLMCSCLTMNRIDLPHLAWCLDKILDGNKDNIIKVDAETAKYAKESLDRMLSIT.

Iminosuccinate contacts are provided by His44 and Ser61. Cys108 contacts [4Fe-4S] cluster. Iminosuccinate-binding positions include 139 to 141 (YVN) and Ser160. Cys228 contributes to the [4Fe-4S] cluster binding site. Residues 254-256 (HPE) and Thr271 contribute to the iminosuccinate site. Position 318 (Cys318) interacts with [4Fe-4S] cluster.

It belongs to the quinolinate synthase family. Type 3 subfamily. It depends on [4Fe-4S] cluster as a cofactor.

Its subcellular location is the cytoplasm. It carries out the reaction iminosuccinate + dihydroxyacetone phosphate = quinolinate + phosphate + 2 H2O + H(+). The protein operates within cofactor biosynthesis; NAD(+) biosynthesis; quinolinate from iminoaspartate: step 1/1. Catalyzes the condensation of iminoaspartate with dihydroxyacetone phosphate to form quinolinate. This is Quinolinate synthase from Staphylococcus carnosus (strain TM300).